A 262-amino-acid polypeptide reads, in one-letter code: Zinc-finger homeodomain protein 6 (262 aa).

2 stretches are compositionally biased toward basic and acidic residues: residues 1–25 and 36–47; these read MEVREKKDEKMEMTRRKSSALDHHR and NKEKPTTKRNGS. Residues 1–93 form a disordered region; the sequence is MEVREKKDEK…ECQKNHAASS (93 aa). The ZF-HD dimerization-type; degenerate zinc finger occupies 82-131; sequence YRECQKNHAASSGGHVVDGCGEFMSSGEEGTVESLLCAACDCHRSFHRKE. Positions 198-261 form a DNA-binding region, homeobox; it reads KKRFRTKFNE…NNKQAAKKKD (64 aa).

As to quaternary structure, homo- and heterodimer with other ZFHD proteins. Interacts with MIF1 and MIF3; these interactions prevent nuclear localization and DNA-binding to inhibit transcription regulation activity. Binds to ZHD1, ZHD2, ZHD10 and ZHD11. In terms of tissue distribution, expressed in seedlings, roots, leaves, stems, flowers and inflorescence.

The protein resides in the nucleus. Putative transcription factor. This is Zinc-finger homeodomain protein 6 (ZHD6) from Arabidopsis thaliana (Mouse-ear cress).